The sequence spans 790 residues: MRTLAGVEDEDKWLAEGIAGIQHNAFFMHRALDANNLREVLKYSALMLSELRTSKLSPQKYYDLYMRAFDQLRQLEIFFKDESRHGLPVVDLYELVQHAGNILPRMYLLCTVGSVYIKSKQAPSKDVLKDLVEMCRGVQHPIRGLFLRSYLAQVSRDKLPEIGSDYEGDANTVMDAVEFVLQNFTEMNKLWVRIQHQGPGTVREKQEKERNELRDLVGKNLHVLGQIEGVDLEMYKETVLPRVLEQVVNCKDKLAQYYLMECIIQVFPDEYHLQTLETLLAACTQLMPTVDTKIVLTQLMDRLSNYAASSPDVLHEFLQVEAFAKLSNAIGKVIDTQLEMPIVGAMTLFVSLLTFTLRVHPDRLDYVDQVLGACVVKLSSVPKLEDARAMKQVVALLSAPLEKYSDIVTALTLSNYPRVMDHLDDGTNKVMAMLIIQSIMKTDSCISTADKVEVLFELIKGLIKDLDETNAEELDEEDFQEEQNSVARLIHMLDNEEPEEMLKIICVVRRHLMTGGPRRLPFTVPPLVFSAVRLVRQLESQGGDIAGEDSATPRKIFQILNQTIEVLTSVPCPELALRLYLQCAEAASDCDLEPVAYEFFTQAFMLYEEEIADSKAQVTAIHLIVGTLQRINVFGVENRDTLTHKATGYSARLLKKPDQCRAVYACSHLFWVDDPDGIKDGERVLLCLRRALRIANAAQQMASATRGSSGPVTLFVEILNKYIYFFEKGNPHITPSDIQSLIELINNEMQSDNGNTTIHSDPFFTSTLRYIKFIKQKGGLMGEKYDPIKL.

The protein belongs to the VPS35 family. Component of the retromer complex which consists of VPS29 (MAG1), VPS26 (VPS26A or VPS26B), VPS35 (VPS35A or VPS35B or VPS35C), VPS5/17 (SNX1 or SNX2A or SNX2B). Component of a retromer subcomplex consisting of VPS29 (MAG1), VPS26 (VPS26A or VPS26B), VPS35 (VPS35A or VPS35B or VPS35C). In terms of tissue distribution, expressed in siliques and maturing seeds (at protein level).

It localises to the cytoplasm. The protein resides in the endosome membrane. It is found in the prevacuolar compartment membrane. Its subcellular location is the golgi apparatus. The protein localises to the trans-Golgi network membrane. In terms of biological role, plays a role in vesicular protein sorting. Component of the membrane-associated retromer complex which is essential in endosome-to-Golgi retrograde transport. Also involved in the efficient sorting of seed storage proteins globulin 12S and albumin 2S. The VPS29-VPS26-VPS35 subcomplex may be involved in recycling of specific cargos from endosome to the plasma membrane. This chain is Vacuolar protein sorting-associated protein 35B (VPS35B), found in Arabidopsis thaliana (Mouse-ear cress).